The sequence spans 84 residues: MNYLRRKMKMSETTLVLTIISTTTTTLFAIIQLYLKIKQALKDAVKEIVNSELSNLKTEIEELKIKQDELSRQVEEIKRKLDQK.

A helical transmembrane segment spans residues 13-35; that stretch reads TTLVLTIISTTTTTLFAIIQLYL. Positions 41 to 84 form a coiled coil; sequence LKDAVKEIVNSELSNLKTEIEELKIKQDELSRQVEEIKRKLDQK.

Its subcellular location is the host membrane. This is an uncharacterized protein from Sulfolobus islandicus rod-shaped virus 1 (SIRV-1).